A 157-amino-acid polypeptide reads, in one-letter code: UPF0225 protein PSPTO_4127 (157 aa).

This sequence belongs to the UPF0225 family.

The protein is UPF0225 protein PSPTO_4127 of Pseudomonas syringae pv. tomato (strain ATCC BAA-871 / DC3000).